The primary structure comprises 257 residues: Type I iodothyronine deiodinase (257 aa).

The Extracellular portion of the chain corresponds to 1-12; the sequence is MGLPGLGLLLKR. The helical; Signal-anchor for type III membrane protein transmembrane segment at 13-33 threads the bilayer; sequence FGVLVRVALKVAVGKVLLTLW. At 34–257 the chain is on the cytoplasmic side; that stretch reads PSAIRPHLLA…CRSSAQSPRL (224 aa). Sec126 is an active-site residue. Sec126 is a non-standard amino acid (selenocysteine).

Belongs to the iodothyronine deiodinase family. In terms of assembly, predominantly monomer. Can form homodimers but homodimerization is not essential for enzyme activity. Liver specific.

It localises to the cell membrane. The protein localises to the endoplasmic reticulum membrane. The protein resides in the basolateral cell membrane. It carries out the reaction 3,3',5-triiodo-L-thyronine + iodide + A + H(+) = L-thyroxine + AH2. The enzyme catalyses 3,3',5'-triiodo-L-thyronine + iodide + A + H(+) = L-thyroxine + AH2. It catalyses the reaction 3,3'-diiodo-L-thyronine + iodide + A + H(+) = 3,3',5'-triiodo-L-thyronine + AH2. The catalysed reaction is 3,3'-diiodo-L-thyronine + iodide + A + H(+) = 3,3',5-triiodo-L-thyronine + AH2. It carries out the reaction 3'-iodo-L-thyronine + iodide + A + H(+) = 3',5'-diiodo-L-thyronine + AH2. The enzyme catalyses 3-iodo-L-thyronine + iodide + A + H(+) = 3,5-diiodo-L-thyronine + AH2. It catalyses the reaction 3-iodo-L-thyronine + iodide + A + H(+) = 3,3'-diiodo-L-thyronine + AH2. The catalysed reaction is 3,3'-diiodothyronamine + iodide + A + H(+) = 3,3',5'-triiodothyronamine + AH2. It carries out the reaction 3'-iodothyronamine + iodide + A + H(+) = 3',5'-diiodothyronamine + AH2. The enzyme catalyses 3-iodothyronamine + iodide + A + H(+) = 3,3'-diiodothyronamine + AH2. It catalyses the reaction 3,3'-diiodothyronamine + iodide + A + H(+) = 3,3',5-triiodothyronamine + AH2. The catalysed reaction is 3-iodothyronamine + iodide + A + H(+) = 3,5-diiodothyronamine + AH2. It carries out the reaction 3,3'-diiodo-L-thyronine sulfate + iodide + A + H(+) = 3,3',5'-triiodo-L-thyronine sulfate + AH2. The enzyme catalyses 3,3',5'-triiodo-L-thyronine sulfate + iodide + A + H(+) = L-thyroxine sulfate + AH2. It catalyses the reaction 3,3'-diiodo-L-thyronine sulfate + iodide + A + H(+) = 3,3',5-triiodo-L-thyronine sulfate + AH2. Its function is as follows. Plays a crucial role in the metabolism of thyroid hormones (TH) and has specific roles in TH activation and inactivation by deiodination. Catalyzes the deiodination of L-thyroxine (T4) to 3,5,3'-triiodothyronine (T3) and 3',5'-diiodothyronine (3',5'-T2) to 3'-monoiodothyronine (3'-T1) via outer-ring deiodination (ORD). Catalyzes the deiodination of T4 to 3,3',5'-triiodothyronine (rT3), T3 to 3,3'-diiodothyronine (3,3'-T2), 3,5-diiodothyronine (3,5-T2) to 3-monoiodothyronine (3-T1) and 3,3'-T2 to 3-T1 via inner-ring deiodination (IRD). Catalyzes the deiodination of rT3 to 3,3'-T2 via ORD. Catalyzes the phenolic ring deiodinations of 3,3',5'-triiodothyronamine, 3',5'-diiodothyronamine and 3,3'-diiodothyronamine as well as tyrosyl ring deiodinations of 3,5,3'-triiodothyronamine and 3,5-diiodothyronamine. Catalyzes the deiodination of L-thyroxine sulfate and 3,3',5-triiodo-L-thyronine sulfate via IRD and of 3,3',5'-triiodo-L-thyronine sulfate via ORD. The polypeptide is Type I iodothyronine deiodinase (DIO1) (Suncus murinus (Asian house shrew)).